The chain runs to 580 residues: Kelch-like protein 38 (580 aa).

A BTB domain is found at 34–101 (TDVSICSGAC…VYTGEVHISA (68 aa)). Residues 136–237 (CLGLVRLAEI…HPAFFHHFIA (102 aa)) form the BACK domain. Kelch repeat units follow at residues 284–331 (FLLL…TLHR), 333–382 (VYVL…THRN), 383–430 (FIFS…VKDQ), 432–478 (LYLF…VLGE), 479–520 (KIII…VMGN), and 522–572 (LYVT…TLQC).

In Rattus norvegicus (Rat), this protein is Kelch-like protein 38 (Klhl38).